The chain runs to 273 residues: UPF0173 metal-dependent hydrolase Bpro_4324 (273 aa).

Belongs to the UPF0173 family.

This is UPF0173 metal-dependent hydrolase Bpro_4324 from Polaromonas sp. (strain JS666 / ATCC BAA-500).